The sequence spans 157 residues: SsrA-binding protein (157 aa).

Belongs to the SmpB family.

The protein resides in the cytoplasm. Its function is as follows. Required for rescue of stalled ribosomes mediated by trans-translation. Binds to transfer-messenger RNA (tmRNA), required for stable association of tmRNA with ribosomes. tmRNA and SmpB together mimic tRNA shape, replacing the anticodon stem-loop with SmpB. tmRNA is encoded by the ssrA gene; the 2 termini fold to resemble tRNA(Ala) and it encodes a 'tag peptide', a short internal open reading frame. During trans-translation Ala-aminoacylated tmRNA acts like a tRNA, entering the A-site of stalled ribosomes, displacing the stalled mRNA. The ribosome then switches to translate the ORF on the tmRNA; the nascent peptide is terminated with the 'tag peptide' encoded by the tmRNA and targeted for degradation. The ribosome is freed to recommence translation, which seems to be the essential function of trans-translation. The sequence is that of SsrA-binding protein from Chromohalobacter salexigens (strain ATCC BAA-138 / DSM 3043 / CIP 106854 / NCIMB 13768 / 1H11).